A 267-amino-acid chain; its full sequence is Glutamate racemase (267 aa).

Residues 10 to 11 (DS) and 42 to 43 (YG) each bind substrate. The Proton donor/acceptor role is filled by Cys-73. Position 74-75 (74-75 (NT)) interacts with substrate. Residue Cys-183 is the Proton donor/acceptor of the active site. 184 to 185 (TH) contacts substrate.

It belongs to the aspartate/glutamate racemases family.

The catalysed reaction is L-glutamate = D-glutamate. It functions in the pathway cell wall biogenesis; peptidoglycan biosynthesis. In terms of biological role, provides the (R)-glutamate required for cell wall biosynthesis. The protein is Glutamate racemase of Lactobacillus acidophilus (strain ATCC 700396 / NCK56 / N2 / NCFM).